The sequence spans 429 residues: MRVSVPGPAAAAAPAAGREPSTPGGGSGGGGAVAAASGAAVPGSVQLALSVLHALLYAALFAFAYLQLWRLLLYRERRLSYQSLCLFLCLLWAALRTTLFSAAFSLSGSLPLLRPPAHLHFFPHWLLYCFPSCLQFSTLCLLNLYLAEVICKVRCATELDRHKILLHLGFIMASLLFLVVNLTCAMLVHGDVPENQLKWTVFVRALINDSLFILCAISLVCYICKITKMSSANVYLESKGMSLCQTVVVGSVVILLYSSRACYNLVVVTISQDTLESPFNYGWDNLSDKAHVEDISGEEYIVFGMVLFLWEHVPAWSVVLFFRAQRLNQNLAPAGMINSHSYSSRAYFFDNPRRYDSDDDLPRLGSSREGSLPNSQSLGWYGTMTGCGSSSYTVTPHLNGPMTDTAPLLFTCSNLDLNNHHSLYVTPQN.

Residues 1–17 (MRVSVPGPAAAAAPAAG) are compositionally biased toward low complexity. The interval 1-29 (MRVSVPGPAAAAAPAAGREPSTPGGGSGG) is disordered. Residues 1-48 (MRVSVPGPAAAAAPAAGREPSTPGGGSGGGGAVAAASGAAVPGSVQLA) are Lumenal-facing. The chain crosses the membrane as a helical span at residues 49 to 69 (LSVLHALLYAALFAFAYLQLW). The Cytoplasmic segment spans residues 70–83 (RLLLYRERRLSYQS). The chain crosses the membrane as a helical span at residues 84–104 (LCLFLCLLWAALRTTLFSAAF). The Lumenal portion of the chain corresponds to 105-120 (SLSGSLPLLRPPAHLH). Residues 121 to 141 (FFPHWLLYCFPSCLQFSTLCL) traverse the membrane as a helical segment. The Cytoplasmic portion of the chain corresponds to 142–167 (LNLYLAEVICKVRCATELDRHKILLH). The helical transmembrane segment at 168–188 (LGFIMASLLFLVVNLTCAMLV) threads the bilayer. The Lumenal segment spans residues 189–205 (HGDVPENQLKWTVFVRA). Residues 206 to 226 (LINDSLFILCAISLVCYICKI) form a helical membrane-spanning segment. At 227 to 246 (TKMSSANVYLESKGMSLCQT) the chain is on the cytoplasmic side. Residues 247–267 (VVVGSVVILLYSSRACYNLVV) form a helical membrane-spanning segment. The Lumenal segment spans residues 268–300 (VTISQDTLESPFNYGWDNLSDKAHVEDISGEEY). Residue asparagine 285 is glycosylated (N-linked (GlcNAc...) asparagine). Residues 301-321 (IVFGMVLFLWEHVPAWSVVLF) traverse the membrane as a helical segment. Topologically, residues 322-429 (FRAQRLNQNL…HHSLYVTPQN (108 aa)) are cytoplasmic.

This sequence belongs to the GPR137 family.

The protein resides in the lysosome membrane. Its function is as follows. Lysosomal integral membrane protein that may regulate MTORC1 complex translocation to lysosomes. This Homo sapiens (Human) protein is Integral membrane protein GPR137C (GPR137C).